The chain runs to 96 residues: Auxin-responsive protein SAUR29 (96 aa).

This sequence belongs to the ARG7 family.

The protein localises to the cell membrane. Functions as a positive effector of cell expansion through modulation of auxin transport. Involved in thermo-responsiveness of plant architecture. Enhances plasma membrane H(+)-ATPase. This Arabidopsis thaliana (Mouse-ear cress) protein is Auxin-responsive protein SAUR29.